The chain runs to 576 residues: Interleukin-1 receptor type 1 (576 aa).

The signal sequence occupies residues Met-1–Ser-19. 3 Ig-like C2-type domains span residues Leu-20–Ser-115, Pro-121–Thr-217, and Pro-229–Val-331. At Leu-20 to Lys-338 the chain is on the extracellular side. Cystine bridges form between Cys-25/Cys-107, Cys-46/Cys-99, and Cys-145/Cys-199. N-linked (GlcNAc...) asparagine glycosylation is found at Asn-63 and Asn-103. 3 N-linked (GlcNAc...) asparagine glycosylation sites follow: Asn-236, Asn-252, and Asn-266. Cysteines 251 and 315 form a disulfide. The helical transmembrane segment at Asn-339 to Tyr-359 threads the bilayer. At Lys-360–Gly-576 the chain is on the cytoplasmic side. In terms of domain architecture, TIR spans Arg-386 to Met-541. The active site involves Glu-473. Tyr-499 is modified (phosphotyrosine). Residue Thr-556 is modified to Phosphothreonine; by PKC.

The protein belongs to the interleukin-1 receptor family. The interleukin-1 receptor complex is a heterodimer of IL1R1 and IL1RAP. Interacts with PIK3R1. Interacts with IL1A. In terms of processing, a soluble form (sIL1R1) is probably produced by proteolytic cleavage at the cell surface (shedding). Post-translationally, rapidly phosphorylated on Tyr-499 in response to IL-1, which creates a SH2 binding site for the PI 3-kinase regulatory subunit PIK3R1.

Its subcellular location is the membrane. It localises to the cell membrane. It is found in the secreted. It carries out the reaction NAD(+) + H2O = ADP-D-ribose + nicotinamide + H(+). Functionally, receptor for IL1A, IL1B and IL1RN. After binding to interleukin-1 associates with the coreceptor IL1RAP to form the high affinity interleukin-1 receptor complex which mediates interleukin-1-dependent activation of NF-kappa-B, MAPK and other pathways. Signaling involves the recruitment of adapter molecules such as TOLLIP, MYD88, and IRAK1 or IRAK2 via the respective TIR domains of the receptor/coreceptor subunits. Binds ligands with comparable affinity and binding of antagonist IL1RN prevents association with IL1RAP to form a signaling complex. Involved in IL1B-mediated costimulation of IFNG production from T-helper 1 (Th1) cells. The protein is Interleukin-1 receptor type 1 (Il1r1) of Rattus norvegicus (Rat).